Here is a 237-residue protein sequence, read N- to C-terminus: Phosphatidylserine decarboxylase proenzyme (237 aa).

The active-site Schiff-base intermediate with substrate; via pyruvic acid is serine 206. Pyruvic acid (Ser); by autocatalysis is present on serine 206.

Belongs to the phosphatidylserine decarboxylase family. PSD-A subfamily. As to quaternary structure, heterodimer of a large membrane-associated beta subunit and a small pyruvoyl-containing alpha subunit. The cofactor is pyruvate. In terms of processing, is synthesized initially as an inactive proenzyme. Formation of the active enzyme involves a self-maturation process in which the active site pyruvoyl group is generated from an internal serine residue via an autocatalytic post-translational modification. Two non-identical subunits are generated from the proenzyme in this reaction, and the pyruvate is formed at the N-terminus of the alpha chain, which is derived from the carboxyl end of the proenzyme. The post-translation cleavage follows an unusual pathway, termed non-hydrolytic serinolysis, in which the side chain hydroxyl group of the serine supplies its oxygen atom to form the C-terminus of the beta chain, while the remainder of the serine residue undergoes an oxidative deamination to produce ammonia and the pyruvoyl prosthetic group on the alpha chain.

Its subcellular location is the cell membrane. The enzyme catalyses a 1,2-diacyl-sn-glycero-3-phospho-L-serine + H(+) = a 1,2-diacyl-sn-glycero-3-phosphoethanolamine + CO2. Its pathway is phospholipid metabolism; phosphatidylethanolamine biosynthesis; phosphatidylethanolamine from CDP-diacylglycerol: step 2/2. Its function is as follows. Catalyzes the formation of phosphatidylethanolamine (PtdEtn) from phosphatidylserine (PtdSer). This is Phosphatidylserine decarboxylase proenzyme from Rhodococcus erythropolis (strain PR4 / NBRC 100887).